The following is a 712-amino-acid chain: Polyribonucleotide nucleotidyltransferase (712 aa).

Mg(2+)-binding residues include Asp-487 and Asp-493. The KH domain maps to 554 to 613 (PKIITMTINPDKIRDVIGPSGKQINKIIEETGVKIDIEQDGTVFISSINQEMNDKAKKII). Residues 623 to 691 (GEIYEGKVKR…KQGRVNLSRK (69 aa)) enclose the S1 motif domain.

The protein belongs to the polyribonucleotide nucleotidyltransferase family. Mg(2+) serves as cofactor.

The protein localises to the cytoplasm. It catalyses the reaction RNA(n+1) + phosphate = RNA(n) + a ribonucleoside 5'-diphosphate. Functionally, involved in mRNA degradation. Catalyzes the phosphorolysis of single-stranded polyribonucleotides processively in the 3'- to 5'-direction. The chain is Polyribonucleotide nucleotidyltransferase from Bacillus anthracis.